The chain runs to 696 residues: Zinc finger SWIM domain-containing protein 3 (696 aa).

Residues 531–572 (VDVQLLEDSHQVSKDGCSCSCSFQQWYHLPCRHILALLHTSQ) form an SWIM-type zinc finger.

The chain is Zinc finger SWIM domain-containing protein 3 (ZSWIM3) from Homo sapiens (Human).